Consider the following 146-residue polypeptide: Hut operon positive regulatory protein (146 aa).

This sequence belongs to the HutP family. Homohexamer.

In terms of biological role, antiterminator that binds to cis-acting regulatory sequences on the mRNA in the presence of histidine, thereby suppressing transcription termination and activating the hut operon for histidine utilization. In Bacillus cereus (strain G9842), this protein is Hut operon positive regulatory protein.